A 347-amino-acid polypeptide reads, in one-letter code: Dihydroorotase (347 aa).

Positions 14 and 16 each coordinate Zn(2+). Substrate-binding positions include 16–18 (HLR) and Asn42. Zn(2+) contacts are provided by Lys100, His137, and His175. An N6-carboxylysine modification is found at Lys100. His137 contributes to the substrate binding site. Leu220 is a substrate binding site. Asp248 contributes to the Zn(2+) binding site. Residue Asp248 is part of the active site. Residues His252 and Ala264 each coordinate substrate.

The protein belongs to the metallo-dependent hydrolases superfamily. DHOase family. Class II DHOase subfamily. In terms of assembly, homodimer. It depends on Zn(2+) as a cofactor.

It catalyses the reaction (S)-dihydroorotate + H2O = N-carbamoyl-L-aspartate + H(+). The protein operates within pyrimidine metabolism; UMP biosynthesis via de novo pathway; (S)-dihydroorotate from bicarbonate: step 3/3. Functionally, catalyzes the reversible cyclization of carbamoyl aspartate to dihydroorotate. This is Dihydroorotase from Jannaschia sp. (strain CCS1).